Here is a 505-residue protein sequence, read N- to C-terminus: Prenylcysteine oxidase 1 (505 aa).

An N-terminal signal peptide occupies residues 1 to 28 (MGRFAAALVGSLFWLGLLLCGLGSLASA). Residues N196, N323, and N353 are each glycosylated (N-linked (GlcNAc...) asparagine).

Belongs to the prenylcysteine oxidase family. FAD is required as a cofactor. As to expression, highly expressed in the liver, kidney, heart and brain.

The protein localises to the lysosome. It carries out the reaction an S-polyprenyl-L-cysteine + O2 + H2O = a polyprenal + L-cysteine + H2O2. The enzyme catalyses S-(2E,6E)-farnesyl-L-cysteine + O2 + H2O = (2E,6E)-farnesal + L-cysteine + H2O2. The catalysed reaction is [(2E,6E,10E)-geranylgeranyl]-L-cysteine + O2 + H2O = (2E,6E,10E)-geranylgeranial + L-cysteine + H2O2. Its function is as follows. Prenylcysteine oxidase that cleaves the thioether bond of prenyl-L-cysteines, such as farnesylcysteine and geranylgeranylcysteine. Only active against free prenylcysteines and not prenylcysteine residues within prenylated proteins or peptides. Involved in the final step in the degradation of prenylated proteins, by degrading prenylcysteines after the protein has been degraded. The sequence is that of Prenylcysteine oxidase 1 from Mus musculus (Mouse).